The following is a 183-amino-acid chain: MREYKVVVLGSGGVGKSALTVQFVTGTFIEKYDPTIEDFYRKEIEVDSSPSVLEILDTAGTEQFASMRDLYIKNGQGFILVYSLVNQQSFQDIKPMRDQIVRVKRYEKVPLILVGNKVDLEPEREVMSSEGRALAQEWGCPFMETSAKSKSMVDELFAEIVRQMNYSSLPEKQDQCCTTCVVQ.

10–17 lines the GTP pocket; sequence GSGGVGKS. The Effector region motif lies at 32 to 40; it reads YDPTIEDFY. Residues 57–61 and 116–119 contribute to the GTP site; these read DTAGT and NKVD. Residues cysteine 176 and cysteine 177 are each lipidated (S-palmitoyl cysteine). The residue at position 180 (cysteine 180) is a Cysteine methyl ester. Cysteine 180 is lipidated: S-geranylgeranyl cysteine. The propeptide at 181–183 is removed in mature form; that stretch reads VVQ.

This sequence belongs to the small GTPase superfamily. Ras family. Palmitoylated. Palmitoylation is required for association with recycling endosome membranes and activation of TNIK.

It is found in the cytoplasm. Its subcellular location is the recycling endosome membrane. The enzyme catalyses GTP + H2O = GDP + phosphate + H(+). Its function is as follows. Small GTP-binding protein which cycles between a GDP-bound inactive and a GTP-bound active form. May play a role in cytoskeletal rearrangements and regulate cell spreading through activation of the effector TNIK. May play a role in SRE-mediated gene transcription. The sequence is that of Ras-related protein Rap-2c (RAP2C) from Bos taurus (Bovine).